The chain runs to 150 residues: Ribonuclease pancreatic delta-type (150 aa).

The signal sequence occupies residues 1–25 (MGLEKSFILFSLLVLVLGWVQPSLG). Substrate is bound at residue arginine 35. Histidine 37 acts as the Proton acceptor in catalysis. 3 disulfides stabilise this stretch: cysteine 51–cysteine 110, cysteine 65–cysteine 121, and cysteine 83–cysteine 136. Residues 66–70 (KRVNT), lysine 91, and arginine 111 each bind substrate. Histidine 145 (proton donor) is an active-site residue.

This sequence belongs to the pancreatic ribonuclease family. In terms of assembly, monomer.

Its subcellular location is the secreted. It catalyses the reaction an [RNA] containing cytidine + H2O = an [RNA]-3'-cytidine-3'-phosphate + a 5'-hydroxy-ribonucleotide-3'-[RNA].. It carries out the reaction an [RNA] containing uridine + H2O = an [RNA]-3'-uridine-3'-phosphate + a 5'-hydroxy-ribonucleotide-3'-[RNA].. Endonuclease that catalyzes the cleavage of RNA on the 3' side of pyrimidine nucleotides. Acts on single-stranded and double-stranded RNA. The polypeptide is Ribonuclease pancreatic delta-type (Rattus rattus (Black rat)).